The chain runs to 305 residues: Translation initiation factor eIF2B subunit alpha (305 aa).

Position 35 is an N6-acetyllysine (Lys35).

Belongs to the eIF-2B alpha/beta/delta subunits family. As to quaternary structure, component of the translation initiation factor 2B (eIF2B) complex which is a heterodecamer of two sets of five different subunits: alpha, beta, gamma, delta and epsilon. Subunits alpha, beta and delta comprise a regulatory subcomplex and subunits epsilon and gamma comprise a catalytic subcomplex. Within the complex, the hexameric regulatory complex resides at the center, with the two heterodimeric catalytic subcomplexes bound on opposite sides.

It localises to the cytoplasm. The protein localises to the cytosol. Activated by the chemical integrated stress response (ISR) inhibitor ISRIB which stimulates guanine nucleotide exchange factor activity for both phosphorylated and unphosphorylated eIF2. In terms of biological role, acts as a component of the translation initiation factor 2B (eIF2B) complex, which catalyzes the exchange of GDP for GTP on eukaryotic initiation factor 2 (eIF2) gamma subunit. Its guanine nucleotide exchange factor activity is repressed when bound to eIF2 complex phosphorylated on the alpha subunit, thereby limiting the amount of methionyl-initiator methionine tRNA available to the ribosome and consequently global translation is repressed. This chain is Translation initiation factor eIF2B subunit alpha (Eif2b1), found in Rattus norvegicus (Rat).